A 222-amino-acid polypeptide reads, in one-letter code: MKSILLLFSLIVLGSATEEVSRTEQTSTLFSVEGEIALPSTRNCAKWSAGARIHLNHGQYMGFVRQDCTFRVDFVPTGTYIVQIENTDFVFEPIRVDITSKGKMRARKLTILQPNNVNTLPYPLRLSARGPARYFRKREEWRITDMLFSPMVLMLVVPLVVMLILPKMTANDPELKKEMENMQMPKVDMPDVGEMMANFFGGSAPAKKKAVTGGSGSGQRRK.

The first 16 residues, 1–16, serve as a signal peptide directing secretion; that stretch reads MKSILLLFSLIVLGSA. At 17–145 the chain is on the extracellular side; that stretch reads TEEVSRTEQT…RKREEWRITD (129 aa). Residues 146 to 166 traverse the membrane as a helical segment; it reads MLFSPMVLMLVVPLVVMLILP. Residues 167 to 222 are Cytoplasmic-facing; it reads KMTANDPELKKEMENMQMPKVDMPDVGEMMANFFGGSAPAKKKAVTGGSGSGQRRK.

Belongs to the EMC7 family.

Its subcellular location is the membrane. In Caenorhabditis elegans, this protein is ER membrane protein complex subunit 7 homolog.